Here is a 65-residue protein sequence, read N- to C-terminus: Large ribosomal subunit protein bL35 (65 aa).

The tract at residues 1-26 (MPKMKTHRGAAKRFKKTGSGKLKRAK) is disordered.

It belongs to the bacterial ribosomal protein bL35 family.

This Clostridium novyi (strain NT) protein is Large ribosomal subunit protein bL35.